We begin with the raw amino-acid sequence, 437 residues long: MAKHATPKLDQLESGPWPSFVSDIKQEAAYRAANPKGLDYQVPVDCPEDLLGVLELSYDEGETHWKHGGIVGVFGYGGGVIGRYCDQPEKFPGVAHFHTVRVAQPSGKYYSADYLRQLCDIWDLRGSGLTNMHGSTGDIVLLGTQTPQLEEIFFELTHNLNTDLGGSGSNLRTPESCLGKSRCEFACYDSQAACYELTMEYQDELHRPAFPYKFKFKFDACPNGCVASIARSDFSVIGTWKDDIKIDAEAVKAYVAGEFKPNAGAHSGRDWGKFDIEAEVVNRCPSKCMKWDGSKLSIDNKECVRCMHCINTMPRALHIGDERGASILCGAKAPILDGAQMGSLLVPFVAAEEPFDEIKEVVEKIWDWWMEEGKNRERLGETMKRLSFQKLLEVTEIAPVPQHVKEPRTNPYIFFKEEEVPGGWDRDITEYRKRHLR.

The [4Fe-4S] cluster site is built by cysteine 177, cysteine 183, cysteine 221, cysteine 225, cysteine 284, cysteine 303, cysteine 306, and cysteine 309. One can recognise a 4Fe-4S ferredoxin-type domain in the interval 294–322; the sequence is SKLSIDNKECVRCMHCINTMPRALHIGDE.

As to quaternary structure, heterohexamer of two alpha, two beta and two gamma subunits.

Part of the complex that catalyzes the reduction of sulfite to sulfide. The alpha and beta subunits may have arisen by gene duplication. They both bind 2 iron-sulfur clusters, but the alpha subunit seems to be catalytically inactive, due to substitutions along the putative substrate access channel, and because it binds sirohydrochlorin (the dematallated form of siroheme) instead of siroheme. This Nitratidesulfovibrio vulgaris (strain ATCC 29579 / DSM 644 / CCUG 34227 / NCIMB 8303 / VKM B-1760 / Hildenborough) (Desulfovibrio vulgaris) protein is Sulfite reductase, dissimilatory-type subunit alpha (dsvA).